We begin with the raw amino-acid sequence, 726 residues long: Eukaryotic translation initiation factor 3 subunit B (726 aa).

A sufficient for interaction with HCR1 and TIF32 region spans residues 1 to 94; sequence MSAALEDIKL…LFVECASPAD (94 aa). The segment at 1 to 219 is sufficient for interaction with PIC8; sequence MSAALEDIKL…GVVMWGGPHF (219 aa). Residues 37–120 enclose the RRM domain; that stretch reads QYIVVCGAPV…HRLFIYTMRD (84 aa). WD repeat units lie at residues 142-182, 186-224, 235-283, 331-374, 442-485, 505-549, and 566-611; these read FPTS…EESV, RKNW…RLRR, VSPS…LQST, LKVP…MSCK, ELKD…FAPE, ITDK…TDKN, and NSFP…VKEE.

This sequence belongs to the eIF-3 subunit B family. As to quaternary structure, component of the eukaryotic translation initiation factor 3 (eIF-3) complex.

Its subcellular location is the cytoplasm. Functionally, RNA-binding component of the eukaryotic translation initiation factor 3 (eIF-3) complex, which is involved in protein synthesis of a specialized repertoire of mRNAs and, together with other initiation factors, stimulates binding of mRNA and methionyl-tRNAi to the 40S ribosome. The eIF-3 complex specifically targets and initiates translation of a subset of mRNAs involved in cell proliferation. This Vanderwaltozyma polyspora (strain ATCC 22028 / DSM 70294 / BCRC 21397 / CBS 2163 / NBRC 10782 / NRRL Y-8283 / UCD 57-17) (Kluyveromyces polysporus) protein is Eukaryotic translation initiation factor 3 subunit B.